The chain runs to 863 residues: Receptor-like protein Cf-9 (863 aa).

Residues 1 to 21 (MDCVKLVFLMLYTFLCQLALS) form the signal peptide. Residues 22–812 (SSLPHLCPED…EEDSPMISWQ (791 aa)) lie on the Extracellular side of the membrane. The tract at residues 24-91 (LPHLCPEDQA…GVHCDETTGQ (68 aa)) is N-cap. 8 N-linked (GlcNAc...) asparagine glycosylation sites follow: Asn48, Asn72, Asn109, Asn127, Asn142, Asn191, Asn204, and Asn212. An LRR 1; degenerate repeat occupies 92–115 (VIALDLRCSQLQGKFHSNSSLFQL). 2 LRR repeats span residues 116–139 (SNLK…KFGE) and 141–164 (SNLT…ICHL). Residues 165 to 191 (SKLHVLRICDQYGLSLVPYNFELLLKN) form an LRR 4; degenerate repeat. LRR repeat units follow at residues 192 to 214 (LTQL…SNFS), 215 to 238 (SHLT…VFHL), 241 to 263 (LQSL…KWNS), 265 to 287 (ASLM…SFSH), 288 to 312 (LTSL…LWNL), 314 to 335 (NIVF…FTIF), 336 to 358 (EKLK…LSFN), 359 to 382 (TQLE…ISGL), 383 to 406 (QNLE…IFSL), 408 to 428 (SLVE…EFKS), 429 to 452 (KTLS…LLNQ), 454 to 476 (NLQL…ICNL), 477 to 500 (KTLI…VVER), 502 to 524 (EYLS…TFSV), 525 to 549 (GNIL…MINC), 551 to 572 (YLTL…WLGY), 573 to 597 (LFQL…GNTN), 599 to 623 (FMGL…ILGN), 667 to 690 (LDSN…IIGD), 691 to 714 (LVGL…SFQN), 715 to 739 (LSVL…LASL), and 741 to 759 (FLEV…IPKG). N-linked (GlcNAc...) asparagine glycosylation is present at Asn262. Residues Asn300 and Asn311 are each glycosylated (N-linked (GlcNAc...) asparagine). Asn378, Asn396, and Asn416 each carry an N-linked (GlcNAc...) asparagine glycan. A glycan (N-linked (GlcNAc...) asparagine) is linked at Asn464. Residue Asn519 is glycosylated (N-linked (GlcNAc...) asparagine). An N-linked (GlcNAc...) asparagine glycan is attached at Asn563. 2 N-linked (GlcNAc...) asparagine glycosylation sites follow: Asn698 and Asn714. N-linked (GlcNAc...) asparagine glycans are attached at residues Asn746 and Asn767. Residues 760 to 812 (KQFDSFGNTSYQGNDGLRGFPLSKLCGGEDQVTTPAELDQEEEEEDSPMISWQ) form a C-cap/acidic domain region. Residues 813 to 833 (GVLVGYGCGLVIGLSVIYIMW) traverse the membrane as a helical segment. Residues 834–863 (STQYPAWFSRMDLKLEHIITTKMKKHKKRY) are Cytoplasmic-facing.

The protein belongs to the RLP family. Interacts with thioredoxin-like protein CITRX.

The protein localises to the cell membrane. Functionally, involved in plant defense. Confers resistance to the fungal pathogen C.fulvum through recognition of the AVR9 elicitor protein. This is Receptor-like protein Cf-9 from Solanum pimpinellifolium (Currant tomato).